The chain runs to 163 residues: NADH-quinone oxidoreductase subunit I (163 aa).

2 consecutive 4Fe-4S ferredoxin-type domains span residues 54-84 (LRRY…IESD) and 94-123 (TRYD…ETHI). [4Fe-4S] cluster is bound by residues cysteine 64, cysteine 67, cysteine 70, cysteine 74, cysteine 103, cysteine 106, cysteine 109, and cysteine 113.

It belongs to the complex I 23 kDa subunit family. In terms of assembly, NDH-1 is composed of 14 different subunits. Subunits NuoA, H, J, K, L, M, N constitute the membrane sector of the complex. [4Fe-4S] cluster serves as cofactor.

The protein resides in the cell inner membrane. The enzyme catalyses a quinone + NADH + 5 H(+)(in) = a quinol + NAD(+) + 4 H(+)(out). Its function is as follows. NDH-1 shuttles electrons from NADH, via FMN and iron-sulfur (Fe-S) centers, to quinones in the respiratory chain. The immediate electron acceptor for the enzyme in this species is believed to be ubiquinone. Couples the redox reaction to proton translocation (for every two electrons transferred, four hydrogen ions are translocated across the cytoplasmic membrane), and thus conserves the redox energy in a proton gradient. In Ralstonia nicotianae (strain ATCC BAA-1114 / GMI1000) (Ralstonia solanacearum), this protein is NADH-quinone oxidoreductase subunit I.